Consider the following 154-residue polypeptide: Peptide deformylase (154 aa).

Positions 90 and 132 each coordinate Fe cation. Residue glutamate 133 is part of the active site. Histidine 136 lines the Fe cation pocket.

This sequence belongs to the polypeptide deformylase family. Fe(2+) serves as cofactor.

It carries out the reaction N-terminal N-formyl-L-methionyl-[peptide] + H2O = N-terminal L-methionyl-[peptide] + formate. Removes the formyl group from the N-terminal Met of newly synthesized proteins. Requires at least a dipeptide for an efficient rate of reaction. N-terminal L-methionine is a prerequisite for activity but the enzyme has broad specificity at other positions. The protein is Peptide deformylase of Desulforudis audaxviator (strain MP104C).